A 933-amino-acid polypeptide reads, in one-letter code: Isoleucine--tRNA ligase (933 aa).

Positions 57–67 (PYANGNIHMGH) match the 'HIGH' region motif. Residue Glu556 coordinates L-isoleucyl-5'-AMP. Residues 597 to 601 (KMSKS) carry the 'KMSKS' region motif. An ATP-binding site is contributed by Lys600. Positions 891, 894, 911, and 914 each coordinate Zn(2+).

The protein belongs to the class-I aminoacyl-tRNA synthetase family. IleS type 1 subfamily. In terms of assembly, monomer. Zn(2+) is required as a cofactor.

The protein localises to the cytoplasm. It carries out the reaction tRNA(Ile) + L-isoleucine + ATP = L-isoleucyl-tRNA(Ile) + AMP + diphosphate. In terms of biological role, catalyzes the attachment of isoleucine to tRNA(Ile). As IleRS can inadvertently accommodate and process structurally similar amino acids such as valine, to avoid such errors it has two additional distinct tRNA(Ile)-dependent editing activities. One activity is designated as 'pretransfer' editing and involves the hydrolysis of activated Val-AMP. The other activity is designated 'posttransfer' editing and involves deacylation of mischarged Val-tRNA(Ile). In Pediococcus pentosaceus (strain ATCC 25745 / CCUG 21536 / LMG 10740 / 183-1w), this protein is Isoleucine--tRNA ligase.